Consider the following 270-residue polypeptide: GILVVSAADGPMPQTREHILLSRNVGVPALVVFLNKVDMVDDEELLELVEMEVRDLLSEYDFPGDDVPVIAGSALKALEGDEKYEEKILELMQAVDDYIPTPERDSDKPFMMPVEDVFSITGRGTVATGRVERGQIKVGEEVEIIGLHDTSKTTVTGVEMFRKLLDYAEAGDNIGALLRGVAREDVQRGQVLAAPGSITPHTKFKAEVYVLSKDEGGRHTPFFSNYRPQFYFRTTDVTGVVQLPEGTEMVMPGDNVEMTVELIAPIAIED.

One can recognise a tr-type G domain in the interval 1 to 103 (GILVVSAADG…AVDDYIPTPE (103 aa)). Residue 35-38 (NKVD) participates in GTP binding.

Belongs to the TRAFAC class translation factor GTPase superfamily. Classic translation factor GTPase family. EF-Tu/EF-1A subfamily. In terms of assembly, monomer.

Its subcellular location is the cytoplasm. The catalysed reaction is GTP + H2O = GDP + phosphate + H(+). In terms of biological role, GTP hydrolase that promotes the GTP-dependent binding of aminoacyl-tRNA to the A-site of ribosomes during protein biosynthesis. The sequence is that of Elongation factor Tu (tuf) from Staphylococcus warneri.